Consider the following 418-residue polypeptide: NADH-quinone oxidoreductase subunit H (418 aa).

Transmembrane regions (helical) follow at residues Leu-15 to Ile-35, Phe-83 to Ile-103, Leu-123 to Leu-143, Val-164 to Ser-184, Val-197 to Glu-217, Leu-262 to Gly-282, Trp-287 to Leu-307, Gly-321 to Ile-341, and Tyr-349 to Leu-369. The tract at residues Ala-394–Glu-418 is disordered.

It belongs to the complex I subunit 1 family. As to quaternary structure, NDH-1 is composed of 14 different subunits. Subunits NuoA, H, J, K, L, M, N constitute the membrane sector of the complex.

The protein localises to the cell membrane. It catalyses the reaction a quinone + NADH + 5 H(+)(in) = a quinol + NAD(+) + 4 H(+)(out). Functionally, NDH-1 shuttles electrons from NADH, via FMN and iron-sulfur (Fe-S) centers, to quinones in the respiratory chain. The immediate electron acceptor for the enzyme in this species is believed to be menaquinone. Couples the redox reaction to proton translocation (for every two electrons transferred, four hydrogen ions are translocated across the cytoplasmic membrane), and thus conserves the redox energy in a proton gradient. This subunit may bind ubiquinone. In Mycobacterium avium (strain 104), this protein is NADH-quinone oxidoreductase subunit H.